A 71-amino-acid chain; its full sequence is Conotoxin AbVIG (71 aa).

A signal peptide spans 1–17; sequence VLIIAVLFLTACQLTTA. Positions 18–40 are excised as a propeptide; that stretch reads ETSSRGKQKHRALRSTDKNSRMT. Cystine bridges form between cysteine 43/cysteine 57, cysteine 50/cysteine 61, and cysteine 56/cysteine 68.

Belongs to the conotoxin O1 superfamily. As to expression, expressed by the venom duct.

It is found in the secreted. The protein is Conotoxin AbVIG of Conus abbreviatus (Abbreviated cone).